Consider the following 847-residue polypeptide: Alpha-glucuronidase (847 aa).

The N-terminal stretch at 1–19 is a signal peptide; sequence MVIRSLLLLLLAAIVPVFA. 8 N-linked (GlcNAc...) asparagine glycosylation sites follow: Asn52, Asn238, Asn321, Asn353, Asn586, Asn692, Asn740, and Asn767.

The protein belongs to the glycosyl hydrolase 67 family.

The protein localises to the secreted. It carries out the reaction an alpha-D-glucuronoside + H2O = D-glucuronate + an alcohol. Functionally, releases 4-O-methylglucuronic acid from xylan. This Hypocrea jecorina (Trichoderma reesei) protein is Alpha-glucuronidase.